Consider the following 807-residue polypeptide: MRLSPVSLRLSRGPALLALALPLAAALAFSDETLDKVTKSEGYCSRILRAQGTRREGYTEFSLRVEGDPDFYKPGSSYRVTLSAAPPSYFRGFTLIALKENQEGDKEEDHAGTFQIIDEEETQFMSNCPVAVTESTPRRRTRIQVFWIAPPTGTGCVILKASIVQKRIIYFQDEGSLTKKLCEQDPTLDGVTDRPILDCCACGTAKYRLTFYGNWSEKTHPKDYPRRANHWSAIIGGSHSKNYVLWEYGGYASEGVKQVAELGSPVKMEEEIRQQSDEVLTVIKAKAQWPAWQPVNVRAAPSAEFSVDRTRHLMSFLTMMGPSPDWNVGLSAEDLCTKECGWVQKVVQDLIPWDAGTDSGVTYESPNKPTIPQEKIRPLTSLDHPQSPFYDPEGGSITQVARVVIERIARKGEQCNIVPDNVDDIVADLAPEEKDEDDTPETCIYSNWSPWSACSSSTCEKGKRMRQRMLKAQLDLSVPCPDTQDFQPCMGPGCSDEDGSTCTMSEWITWSPCSVSCGMGMRSRERYVKQFPEDGSVCMLPTEETEKCTVNEECSPSSCLVTEWGEWDDCSATCGMGMKKRHRMVKMSPADGSMCKAETSQAEKCMMPECHTIPCLLSPWSEWSDCSVTCGKGMRTRQRMLKSLAELGDCNEDLEQAEKCMLPECPIDCELSEWSQWSECNKSCGKGHMIRTRTIQMEPQFGGVPCPETVQRKKCRTRKCLRSPSVQKLRWREARESRRSEQLREESDGEQFPGCRMRPWTAWSECTKLCGGGIQERYMTVKKRFKSSQFTSCKDKKEIRACNVHPC.

An N-terminal signal peptide occupies residues 1 to 28 (MRLSPVSLRLSRGPALLALALPLAAALA). The Reelin domain occupies 29-194 (FSDETLDKVT…DPTLDGVTDR (166 aa)). Disulfide bonds link Cys-44/Cys-128, Cys-156/Cys-182, Cys-199/Cys-336, Cys-200/Cys-340, Cys-202/Cys-415, Cys-443/Cys-480, Cys-454/Cys-489, Cys-459/Cys-494, Cys-502/Cys-538, Cys-513/Cys-517, Cys-548/Cys-554, Cys-559/Cys-595, Cys-570/Cys-574, Cys-605/Cys-610, Cys-615/Cys-650, Cys-626/Cys-630, and Cys-660/Cys-665. The Spondin domain occupies 195-388 (PILDCCACGT…LTSLDHPQSP (194 aa)). Asn-214 carries an N-linked (GlcNAc...) asparagine glycan. Residues Asp-325, Asp-354, and Asp-358 each contribute to the Ca(2+) site. TSP type-1 domains lie at 442–495 (TCIY…PGCS), 501–555 (TCTM…EECS), 558–611 (SCLV…PECH), 614–666 (PCLL…PECP), and 668–721 (DCEL…RKCL). Asn-681 carries an N-linked (GlcNAc...) asparagine glycan. A compositionally biased stretch (basic and acidic residues) spans 732–746 (REARESRRSEQLREE). The segment at 732–752 (REARESRRSEQLREESDGEQF) is disordered. Residues 754–806 (GCRMRPWTAWSECTKLCGGGIQERYMTVKKRFKSSQFTSCKDKKEIRACNVHP) form the TSP type-1 6 domain.

Binds to the central extracellular domain of APP and inhibits beta-secretase cleavage of APP.

It localises to the secreted. The protein localises to the extracellular space. It is found in the extracellular matrix. In terms of biological role, cell adhesion protein that promotes the attachment of spinal cord and sensory neuron cells and the outgrowth of neurites in vitro. May contribute to the growth and guidance of axons in both the spinal cord and the PNS. This Mus musculus (Mouse) protein is Spondin-1 (Spon1).